A 228-amino-acid polypeptide reads, in one-letter code: Phosphatidylserine decarboxylase proenzyme (228 aa).

Residue Ser-197 is the Schiff-base intermediate with substrate; via pyruvic acid of the active site. Ser-197 carries the post-translational modification Pyruvic acid (Ser); by autocatalysis.

Belongs to the phosphatidylserine decarboxylase family. PSD-A subfamily. Heterodimer of a large membrane-associated beta subunit and a small pyruvoyl-containing alpha subunit. Pyruvate is required as a cofactor. Post-translationally, is synthesized initially as an inactive proenzyme. Formation of the active enzyme involves a self-maturation process in which the active site pyruvoyl group is generated from an internal serine residue via an autocatalytic post-translational modification. Two non-identical subunits are generated from the proenzyme in this reaction, and the pyruvate is formed at the N-terminus of the alpha chain, which is derived from the carboxyl end of the proenzyme. The post-translation cleavage follows an unusual pathway, termed non-hydrolytic serinolysis, in which the side chain hydroxyl group of the serine supplies its oxygen atom to form the C-terminus of the beta chain, while the remainder of the serine residue undergoes an oxidative deamination to produce ammonia and the pyruvoyl prosthetic group on the alpha chain.

It localises to the cell membrane. The catalysed reaction is a 1,2-diacyl-sn-glycero-3-phospho-L-serine + H(+) = a 1,2-diacyl-sn-glycero-3-phosphoethanolamine + CO2. It participates in phospholipid metabolism; phosphatidylethanolamine biosynthesis; phosphatidylethanolamine from CDP-diacylglycerol: step 2/2. Functionally, catalyzes the formation of phosphatidylethanolamine (PtdEtn) from phosphatidylserine (PtdSer). This is Phosphatidylserine decarboxylase proenzyme from Bacteroides thetaiotaomicron (strain ATCC 29148 / DSM 2079 / JCM 5827 / CCUG 10774 / NCTC 10582 / VPI-5482 / E50).